Reading from the N-terminus, the 286-residue chain is 2,3,4,5-tetrahydropyridine-2,6-dicarboxylate N-succinyltransferase (286 aa).

Belongs to the transferase hexapeptide repeat family.

The protein localises to the cytoplasm. The catalysed reaction is (S)-2,3,4,5-tetrahydrodipicolinate + succinyl-CoA + H2O = (S)-2-succinylamino-6-oxoheptanedioate + CoA. Its pathway is amino-acid biosynthesis; L-lysine biosynthesis via DAP pathway; LL-2,6-diaminopimelate from (S)-tetrahydrodipicolinate (succinylase route): step 1/3. This chain is 2,3,4,5-tetrahydropyridine-2,6-dicarboxylate N-succinyltransferase, found in Rhizobium leguminosarum bv. trifolii (strain WSM2304).